The following is a 154-amino-acid chain: Myoglobin (154 aa).

In terms of domain architecture, Globin spans 2 to 148 (VLSEGEWQLV…FRKDIAAKYK (147 aa)). Serine 4 is modified (phosphoserine). Histidine 65 is a nitrite binding site. Histidine 65 lines the O2 pocket. The residue at position 68 (threonine 68) is a Phosphothreonine. A heme b-binding site is contributed by histidine 94.

The protein belongs to the globin family. In terms of assembly, monomeric.

The protein localises to the cytoplasm. Its subcellular location is the sarcoplasm. The enzyme catalyses Fe(III)-heme b-[protein] + nitric oxide + H2O = Fe(II)-heme b-[protein] + nitrite + 2 H(+). It carries out the reaction H2O2 + AH2 = A + 2 H2O. Monomeric heme protein which primary function is to store oxygen and facilitate its diffusion within muscle tissues. Reversibly binds oxygen through a pentacoordinated heme iron and enables its timely and efficient release as needed during periods of heightened demand. Depending on the oxidative conditions of tissues and cells, and in addition to its ability to bind oxygen, it also has a nitrite reductase activity whereby it regulates the production of bioactive nitric oxide. Under stress conditions, like hypoxia and anoxia, it also protects cells against reactive oxygen species thanks to its pseudoperoxidase activity. The sequence is that of Myoglobin (MB) from Physeter macrocephalus (Sperm whale).